Consider the following 251-residue polypeptide: Probable transcriptional regulatory protein Arth_2304 (251 aa).

This sequence belongs to the TACO1 family.

Its subcellular location is the cytoplasm. The polypeptide is Probable transcriptional regulatory protein Arth_2304 (Arthrobacter sp. (strain FB24)).